The primary structure comprises 449 residues: MYHIWIKFLAAWIFLKRFNGVHVMQAKAPMYRNEPFLVFWNAPTTQCRLRYKVDLDLKTFHIVSNANDSLSGSAVTIFYPNHLGVYPHIDDRGHFFHGIIPQNESLTKHLNKSKSDINRIIPLKAFHGLGVIDWENWRPQWDRNWGSKNVYRNRSIQFARDLHPELSEDKIRRLAKKEYEKAAKSFMRDTLLLAEEMRPDGYWGYYLYPDCQNYDYKTKGDQYTGKCPEIEMSRNDQLLWLWRDSTALFPNVYLEIILRSSDNALKFVHHRLKEAMRIASMAREDYALPVFAYARPFYAYTFEPLTQEDLVTTVGETAAMGAAGIVFWGSVQYASTVDSCQKVKKYMNGPLGRYIVNVTTAAKICSRVLCRKNGRCVRKHSDSNAFLHLFPESFRIMVYANATEKKVIVKGKLELENLIYLRENFMCQCYQGWKGLYCEEYSIKDIRKI.

A signal peptide spans 1-23 (MYHIWIKFLAAWIFLKRFNGVHV). 2 cysteine pairs are disulfide-bonded: cysteine 47/cysteine 340 and cysteine 211/cysteine 227. N-linked (GlcNAc...) asparagine glycosylation is found at asparagine 67, asparagine 103, and asparagine 111. The active-site Proton donor is glutamate 135. The N-linked (GlcNAc...) asparagine glycan is linked to asparagine 153. Asparagine 357 is a glycosylation site (N-linked (GlcNAc...) asparagine). 3 disulfides stabilise this stretch: cysteine 365–cysteine 376, cysteine 370–cysteine 427, and cysteine 429–cysteine 438. The N-linked (GlcNAc...) asparagine glycan is linked to asparagine 401. Positions 427–438 (CQCYQGWKGLYC) constitute an EGF-like domain.

This sequence belongs to the glycosyl hydrolase 56 family. As to quaternary structure, monomer. Expressed by the venom gland.

It localises to the secreted. It catalyses the reaction Random hydrolysis of (1-&gt;4)-linkages between N-acetyl-beta-D-glucosamine and D-glucuronate residues in hyaluronate.. In terms of biological role, snake venom endo-hyaluronidase that degrades hyaluronan to smaller oligosaccharide fragments. In venom, it is not toxic by itself, but increases the diffusion of other venom proteins by degrading the extracellular matrix. In addition, it displays antiedematogenic activity. The polypeptide is Hyaluronidase-4 (Cerastes cerastes (Horned desert viper)).